The sequence spans 220 residues: Outer membrane protein assembly factor BamD (220 aa).

Positions 1 to 22 (MRLKHFKTFLFITMAIIVIGTG) are cleaved as a signal peptide. Cys-23 carries N-palmitoyl cysteine lipidation. Cys-23 carries the S-diacylglycerol cysteine lipid modification.

This sequence belongs to the BamD family. In terms of assembly, part of the Bam complex.

Its subcellular location is the cell outer membrane. Functionally, part of the outer membrane protein assembly complex, which is involved in assembly and insertion of beta-barrel proteins into the outer membrane. This is Outer membrane protein assembly factor BamD from Helicobacter pylori (strain ATCC 700392 / 26695) (Campylobacter pylori).